A 57-amino-acid polypeptide reads, in one-letter code: Somatostatin-2 (57 aa).

Residues 1–26 are disordered; sequence GRSHMVLNSALEGARGGPGGEEIPER.

It belongs to the somatostatin family.

It is found in the secreted. Its function is as follows. Somatostatin inhibits the release of somatotropin. The protein is Somatostatin-2 (sst2) of Piaractus mesopotamicus (Small-scaled pacu).